Consider the following 320-residue polypeptide: Protoheme IX farnesyltransferase 1 (320 aa).

9 helical membrane passes run 34–54, 58–78, 112–132, 135–155, 160–180, 189–209, 234–254, 255–275, and 299–319; these read GIIISNSIAAFGGFWIAFASA, LTGLAFLMTMVTAMLGTAFVM, AMILTYGSVLGIAGLAMLYSL, LTAFLGLAAFIFYAIIYTVWV, VWSTFVGSFPGAAPPLMGYCA, AVLLYTIMFLWQPPHFWAIGI, IKMMQYIAVLVPVTLLFPFSL, GTGHISPFYFLAALVLGGIWI, and LIYFCLLFFIMMIDSFMMFLI.

The protein belongs to the UbiA prenyltransferase family. Protoheme IX farnesyltransferase subfamily. As to quaternary structure, interacts with CtaA.

It localises to the cell membrane. The enzyme catalyses heme b + (2E,6E)-farnesyl diphosphate + H2O = Fe(II)-heme o + diphosphate. It functions in the pathway porphyrin-containing compound metabolism; heme O biosynthesis; heme O from protoheme: step 1/1. Its function is as follows. Converts heme B (protoheme IX) to heme O by substitution of the vinyl group on carbon 2 of heme B porphyrin ring with a hydroxyethyl farnesyl side group. The chain is Protoheme IX farnesyltransferase 1 (ctaB1) from Bacillus subtilis (strain 168).